Reading from the N-terminus, the 116-residue chain is Large ribosomal subunit protein bL19 (116 aa).

It belongs to the bacterial ribosomal protein bL19 family.

Functionally, this protein is located at the 30S-50S ribosomal subunit interface and may play a role in the structure and function of the aminoacyl-tRNA binding site. This is Large ribosomal subunit protein bL19 from Ectopseudomonas mendocina (strain ymp) (Pseudomonas mendocina).